Here is a 101-residue protein sequence, read N- to C-terminus: Small ribosomal subunit protein bS18c (101 aa).

Residues 1 to 19 (MDKSKQPFRKSKRSFRRRL) show a composition bias toward basic residues. Positions 1 to 24 (MDKSKQPFRKSKRSFRRRLPPIGS) are disordered.

The protein belongs to the bacterial ribosomal protein bS18 family. Part of the 30S ribosomal subunit.

It localises to the plastid. It is found in the chloroplast. The sequence is that of Small ribosomal subunit protein bS18c from Amborella trichopoda.